The primary structure comprises 277 residues: Large ribosomal subunit protein uL2 (277 aa).

Disordered regions lie at residues 1-20 (MAVKKYRPYTPSRRQMTTAD) and 210-277 (GRSR…RGGK). A compositionally biased stretch (basic residues) spans 210–221 (GRSRWLGRKPHQ).

It belongs to the universal ribosomal protein uL2 family. Part of the 50S ribosomal subunit. Forms a bridge to the 30S subunit in the 70S ribosome.

In terms of biological role, one of the primary rRNA binding proteins. Required for association of the 30S and 50S subunits to form the 70S ribosome, for tRNA binding and peptide bond formation. It has been suggested to have peptidyltransferase activity; this is somewhat controversial. Makes several contacts with the 16S rRNA in the 70S ribosome. This is Large ribosomal subunit protein uL2 from Deinococcus deserti (strain DSM 17065 / CIP 109153 / LMG 22923 / VCD115).